Reading from the N-terminus, the 277-residue chain is Membrane protein insertase YidC 2 (277 aa).

The N-terminal stretch at 1–22 (MKKYRKILAMLAVLAIVLVLSG) is a signal peptide. Residue cysteine 23 is the site of N-palmitoyl cysteine attachment. Residue cysteine 23 is the site of S-diacylglycerol cysteine attachment. 5 helical membrane passes run 35 to 55 (FWDG…SNLF), 60 to 80 (GLGI…LMIF), 130 to 150 (ASML…QAIW), 170 to 190 (PYYV…WLAM), and 208 to 228 (PVII…YWVI). Basic and acidic residues predominate over residues 251-266 (EAKKQAERDRKRTLEK). The interval 251–277 (EAKKQAERDRKRTLEKARKRAIRNHKR) is disordered. Residues 267–277 (ARKRAIRNHKR) show a composition bias toward basic residues.

The protein belongs to the OXA1/ALB3/YidC family. Type 2 subfamily.

It localises to the cell membrane. In terms of biological role, required for the insertion and/or proper folding and/or complex formation of integral membrane proteins into the membrane. Involved in integration of membrane proteins that insert both dependently and independently of the Sec translocase complex, as well as at least some lipoproteins. This Lactiplantibacillus plantarum (strain ATCC BAA-793 / NCIMB 8826 / WCFS1) (Lactobacillus plantarum) protein is Membrane protein insertase YidC 2.